The primary structure comprises 56 residues: Large ribosomal subunit protein uL30 (56 aa).

Belongs to the universal ribosomal protein uL30 family. In terms of assembly, part of the 50S ribosomal subunit.

The sequence is that of Large ribosomal subunit protein uL30 from Oleidesulfovibrio alaskensis (strain ATCC BAA-1058 / DSM 17464 / G20) (Desulfovibrio alaskensis).